The following is a 210-amino-acid chain: Kalata-B2 (210 aa).

The first 22 residues, Met1–Gly22, serve as a signal peptide directing secretion. Residues Ala23–Lys66 constitute a propeptide that is removed on maturation. Residues Gly67 to Asp95 constitute a cross-link (cyclopeptide (Gly-Asp)). Intrachain disulfides connect Cys71–Cys85, Cys75–Cys87, and Cys80–Cys92. Positions Ser96–Lys120 are excised as a propeptide. Positions Gly121–Asp149 form a cross-link, cyclopeptide (Gly-Asp). Cystine bridges form between Cys125-Cys139, Cys129-Cys141, and Cys134-Cys146. Residues Ser150 to Lys174 constitute a propeptide that is removed on maturation. The segment at residues Gly175 to Asp203 is a cross-link (cyclopeptide (Gly-Asp)). Intrachain disulfides connect Cys179–Cys193, Cys183–Cys195, and Cys188–Cys200. Residues Ser204–Ala210 constitute a propeptide that is removed on maturation.

This sequence belongs to the cyclotide family. Moebius subfamily. In terms of processing, kalata-B2 is a cyclic peptide which occurs in three forms: with unmodified Trp, with Trp oxidized to form N-formylkynurenine and with Trp oxidized to form kynurenine. Oxidation is enhanced by exposure to sunlight.

In terms of biological role, probably participates in a plant defense mechanism. Inhibitory effect on the growth and development of larvae from Helicoverpa punctigera. Has hemolytic activity. This Oldenlandia affinis protein is Kalata-B2 (OAK4).